The sequence spans 557 residues: Hyaluronan synthase 3 (557 aa).

At 1–10 the chain is on the cytoplasmic side; the sequence is MPGKFQTGLR. Residues 11 to 31 form a helical membrane-spanning segment; the sequence is VLATCLFALLVLGGILVAYVT. Residues 32–44 are Extracellular-facing; the sequence is GYQFIHTDRHHLS. The chain crosses the membrane as a helical span at residues 45 to 65; the sequence is FGLYGAILGLHLLSQSLFAFL. Residues 66–367 lie on the Cytoplasmic side of the membrane; sequence EHRKMRGGGR…NALWFHKHHL (302 aa). The chain crosses the membrane as a helical span at residues 368–388; that stretch reads WMTYESVVTGFFPFFLVATVV. At 389–398 the chain is on the extracellular side; the sequence is QLFYRGRVWN. Residues 399-419 traverse the membrane as a helical segment; it reads ILLFLLTVQLVGILKATYACI. At 420–430 the chain is on the cytoplasmic side; it reads LRGNAEMIFMS. Residues 431–451 traverse the membrane as a helical segment; the sequence is LYSLLYMTSLLPAKIFAVITI. Residues 452–463 lie on the Extracellular side of the membrane; it reads KKSGWGTSGRRK. Residues 464–484 traverse the membrane as a helical segment; sequence LVVNFMGMVPVSVWFCILLGG. Residues 485–501 lie on the Cytoplasmic side of the membrane; the sequence is LVYTAYCQSHDPFTETE. The helical transmembrane segment at 502–522 threads the bilayer; the sequence is LLFLLTGAILYGCYWVALLSL. At 523 to 557 the chain is on the extracellular side; sequence YLALIARRCGKRQELYNLALEEVSEPEPAAKAIKP.

This sequence belongs to the NodC/HAS family. Mg(2+) serves as cofactor. Post-translationally, O-GlcNAcylation increases the hyaluronan synthase activity, HAS3 stability and its plasma membrane residence. The concentration of UDP-GlcNAc controls the level of O-GlcNAc modification.

It localises to the cell membrane. The protein localises to the golgi apparatus membrane. It is found in the golgi apparatus. The protein resides in the trans-Golgi network membrane. Its subcellular location is the cytoplasmic vesicle. It carries out the reaction [hyaluronan](n) + UDP-N-acetyl-alpha-D-glucosamine = N-acetyl-beta-D-glucosaminyl-(1-&gt;4)-[hyaluronan](n) + UDP + H(+). It catalyses the reaction N-acetyl-beta-D-glucosaminyl-(1-&gt;4)-[hyaluronan](n) + UDP-alpha-D-glucuronate = [hyaluronan](n+1) + UDP + H(+). It functions in the pathway glycan biosynthesis; hyaluronan biosynthesis. In terms of biological role, catalyzes the addition of GlcNAc or GlcUA monosaccharides to the nascent hyaluronan polymer. Therefore, it is essential to hyaluronan synthesis a major component of most extracellular matrices that has a structural role in tissues architectures and regulates cell adhesion, migration and differentiation. This is one of three isoenzymes responsible for cellular hyaluronan synthesis. In Xenopus laevis (African clawed frog), this protein is Hyaluronan synthase 3 (has3).